Consider the following 374-residue polypeptide: Alanine racemase (374 aa).

The Proton acceptor; specific for D-alanine role is filled by K34. An N6-(pyridoxal phosphate)lysine modification is found at K34. Residue R138 coordinates substrate. Y265 functions as the Proton acceptor; specific for L-alanine in the catalytic mechanism. M313 is a substrate binding site.

This sequence belongs to the alanine racemase family. Pyridoxal 5'-phosphate serves as cofactor.

The enzyme catalyses L-alanine = D-alanine. It participates in amino-acid biosynthesis; D-alanine biosynthesis; D-alanine from L-alanine: step 1/1. Its function is as follows. Catalyzes the interconversion of L-alanine and D-alanine. May also act on other amino acids. In Hahella chejuensis (strain KCTC 2396), this protein is Alanine racemase (alr).